A 383-amino-acid polypeptide reads, in one-letter code: Ovalbumin (383 aa).

G2 is modified (N-acetylglycine). The not cleaved signal peptide spans H22–D48. The residue at position 69 (S69) is a Phosphoserine. Cysteines 74 and 121 form a disulfide. 2 N-linked (GlcNAc...) asparagine glycosylation sites follow: N293 and N312. S345 carries the post-translational modification Phosphoserine.

The protein belongs to the serpin family. Ov-serpin subfamily. Post-translationally, the signal sequence is not cleaved. The functional signal for membrane translocation of ovalbumin becomes accessible when the nascent chain is 50 to 60 residues long. The hydrophobic sequence which lies between residues 27 and 43 folds back on the preceding residues to form an amphipathic hairpin structure which is the signal element recognized by the membrane. Major protein of egg white.

The protein resides in the secreted. Functionally, storage protein of egg white. Lack protease inhibitory activity. The protein is Ovalbumin (SERPINB14) of Coturnix japonica (Japanese quail).